Here is a 791-residue protein sequence, read N- to C-terminus: FHF complex subunit HOOK-interacting protein 1B (791 aa).

Disordered stretches follow at residues Ala465–Pro510 and Ser524–Glu556. Ser467 carries the post-translational modification Phosphoserine. Positions Ser496 to Pro510 are enriched in low complexity. 5 positions are modified to phosphoserine: Ser524, Ser537, Ser543, Ser547, and Ser679. Positions Thr541–Pro552 are enriched in low complexity. Thr708 carries the post-translational modification Phosphothreonine. A Phosphoserine modification is found at Ser716.

It belongs to the FHIP family. Component of the FTS/Hook/FHIP complex (FHF complex), composed of AKTIP/FTS, FHIP1B, and one or more members of the Hook family of proteins HOOK1, HOOK2, and HOOK3. The FHF complex associates with the homotypic vesicular sorting complex (the HOPS complex).

Component of the FTS/Hook/FHIP complex (FHF complex). The FHF complex may function to promote vesicle trafficking and/or fusion via the homotypic vesicular protein sorting complex (the HOPS complex). FHF complex promotes the distribution of AP-4 complex to the perinuclear area of the cell. The polypeptide is FHF complex subunit HOOK-interacting protein 1B (Fhip1b) (Rattus norvegicus (Rat)).